The following is a 150-amino-acid chain: Transcriptional repressor NrdR (150 aa).

A zinc finger spans residues 3–34 (CPFCGQLDSKVVDSRPDKGGAAIRRRRECESC). Residues 49–139 (PLVLKKDGRR…VYRSFKDVNE (91 aa)) enclose the ATP-cone domain.

Belongs to the NrdR family. It depends on Zn(2+) as a cofactor.

Negatively regulates transcription of bacterial ribonucleotide reductase nrd genes and operons by binding to NrdR-boxes. This chain is Transcriptional repressor NrdR, found in Geobacter sulfurreducens (strain ATCC 51573 / DSM 12127 / PCA).